The sequence spans 467 residues: Chromosomal replication initiator protein DnaA (467 aa).

Residues 1 to 90 (MSLSLWQQCL…KPVTQTPQAA (90 aa)) form a domain I, interacts with DnaA modulators region. Positions 91–130 (VTSNVAAPAQVAQTQPQRAAPSTRSGWDNVPAPAEPTYRS) are domain II. The span at 98–111 (PAQVAQTQPQRAAP) shows a compositional bias: low complexity. Residues 98-119 (PAQVAQTQPQRAAPSTRSGWDN) form a disordered region. The interval 131–347 (NVNVKHTFDN…GALNRVIANA (217 aa)) is domain III, AAA+ region. Positions 175, 177, 178, and 179 each coordinate ATP. Residues 348–467 (NFTGRAITID…FSNLIRTLSS (120 aa)) form a domain IV, binds dsDNA region.

It belongs to the DnaA family. In terms of assembly, oligomerizes as a right-handed, spiral filament on DNA at oriC.

The protein resides in the cytoplasm. Its function is as follows. Plays an essential role in the initiation and regulation of chromosomal replication. ATP-DnaA binds to the origin of replication (oriC) to initiate formation of the DNA replication initiation complex once per cell cycle. Binds the DnaA box (a 9 base pair repeat at the origin) and separates the double-stranded (ds)DNA. Forms a right-handed helical filament on oriC DNA; dsDNA binds to the exterior of the filament while single-stranded (ss)DNA is stabiized in the filament's interior. The ATP-DnaA-oriC complex binds and stabilizes one strand of the AT-rich DNA unwinding element (DUE), permitting loading of DNA polymerase. After initiation quickly degrades to an ADP-DnaA complex that is not apt for DNA replication. Binds acidic phospholipids. The sequence is that of Chromosomal replication initiator protein DnaA from Shigella sonnei (strain Ss046).